The primary structure comprises 1577 residues: MAP kinase-activating death domain protein (1577 aa).

Residues 13–267 (YLVIVGARHP…VPVSGQKRVD (255 aa)) enclose the uDENN domain. A compositionally biased stretch (basic and acidic residues) spans 106–121 (KEKVEGGAGPRGKEGA). The tract at residues 106 to 166 (KEKVEGGAGP…WGKRRAKAGS (61 aa)) is disordered. Positions 123 to 140 (TSGASEEAATGSSESGST) are enriched in low complexity. Polar residues predominate over residues 141-156 (LQPPSADSTPDINQSP). Ser-155 carries the post-translational modification Phosphoserine. Residues 288–428 (RFTLVDFPLH…ESLELKKHLK (141 aa)) enclose the cDENN domain. The 135-residue stretch at 430-564 (ALASMSLNTQ…LNPSNYAFQR (135 aa)) folds into the dDENN domain. 2 disordered regions span residues 604–635 (LSVP…SSYS) and 676–840 (QPQK…NSTE). Residues 614 to 629 (SDPTEDSGSDSQDYDD) show a composition bias toward acidic residues. A phosphoserine mark is found at Ser-688 and Ser-691. Positions 688–698 (SENSQENPPLR) are enriched in polar residues. The span at 699-715 (SSSSTTASSSPSTVVHS) shows a compositional bias: low complexity. Over residues 793–803 (PRFSQHVSGSR) the composition is skewed to polar residues. 3 positions are modified to phosphoserine: Ser-812, Ser-817, and Ser-819. Residues 826-839 (RASSPNSTVSNNST) show a composition bias toward low complexity. Ser-857, Ser-861, Ser-915, Ser-920, Ser-929, and Ser-1058 each carry phosphoserine. Disordered regions lie at residues 912-940 (QKSS…SSEN), 1050-1109 (KEPD…DTRS), and 1127-1272 (EVKK…RSSE). Residues 928–938 (SSPQGRSSNSS) are compositionally biased toward low complexity. Phosphothreonine occurs at positions 1060 and 1065. Ser-1109 carries the post-translational modification Phosphoserine. Positions 1127-1141 (EVKKQKALEKQRPEG) are enriched in basic and acidic residues. The span at 1157–1172 (QMSADSGVSLTSASQR) shows a compositional bias: polar residues. A compositionally biased stretch (low complexity) spans 1189–1203 (SSSQDSEVSTVSNSS). A compositionally biased stretch (polar residues) spans 1232–1248 (SRATLSDSEIETNSATS). The residue at position 1235 (Thr-1235) is a Phosphothreonine. A phosphoserine mark is found at Ser-1237 and Ser-1266. The Death domain maps to 1336 to 1411 (GMDQGPQEMI…GLVYSQQVNE (76 aa)).

This sequence belongs to the MADD family. In terms of assembly, interacts (via death domain) with TNFRSF1A (via death domain). Interacts with PIDD1. Interacts with YWHAZ. Interacts (via death domain) with KIF1B; links the motor KIF1B to Rab3-carrying vesicles in anterograde synaptic vesicle transport. Interacts with KIF1A. Interacts (via uDENN domain) with RAB3A, RAB3B, RAB3C and RAB3D; the GTP-bound form of the Rab proteins is preferred for interaction. As to expression, expressed in the brain.

The protein localises to the cell membrane. It localises to the cytoplasm. Its subcellular location is the cell projection. The protein resides in the axon. Guanyl-nucleotide exchange factor that regulates small GTPases of the Rab family. Converts GDP-bound inactive form of RAB27A and RAB27B to the GTP-bound active forms. Converts GDP-bound inactive form of RAB3A, RAB3C and RAB3D to the GTP-bound active forms, GTPases involved in synaptic vesicle exocytosis and vesicle secretion. Plays a role in synaptic vesicle formation and in vesicle trafficking at the neuromuscular junction. Involved in up-regulating a post-docking step of synaptic exocytosis in central synapses. Probably by binding to the motor proteins KIF1B and KIF1A, mediates motor-dependent transport of GTP-RAB3A-positive vesicles to the presynaptic nerve terminals. Plays a role in TNFA-mediated activation of the MAPK pathway, including ERK1/2. May link TNFRSF1A with MAP kinase activation. May be involved in the regulation of TNFA-induced apoptosis. In Mus musculus (Mouse), this protein is MAP kinase-activating death domain protein.